Consider the following 51-residue polypeptide: MREKIRLVSSAGTGHFYTTTKNKRTMPEKMEIKKFDPVVRKHVAYKEAKIK.

The protein belongs to the bacterial ribosomal protein bL33 family.

This Hahella chejuensis (strain KCTC 2396) protein is Large ribosomal subunit protein bL33.